The following is a 238-amino-acid chain: Uridylate kinase (238 aa).

12-15 lines the ATP pocket; sequence KLSG. Gly-54 is a UMP binding site. ATP is bound by residues Gly-55 and Arg-59. UMP contacts are provided by residues Asp-74 and 135 to 142; that span reads TGNPFFTT. ATP is bound by residues Thr-162, Tyr-168, and Asp-171.

Belongs to the UMP kinase family. Homohexamer.

The protein resides in the cytoplasm. It carries out the reaction UMP + ATP = UDP + ADP. It participates in pyrimidine metabolism; CTP biosynthesis via de novo pathway; UDP from UMP (UMPK route): step 1/1. Its activity is regulated as follows. Inhibited by UTP. In terms of biological role, catalyzes the reversible phosphorylation of UMP to UDP. The chain is Uridylate kinase from Bordetella parapertussis (strain 12822 / ATCC BAA-587 / NCTC 13253).